The sequence spans 307 residues: UDP-3-O-acyl-N-acetylglucosamine deacetylase (307 aa).

Zn(2+)-binding residues include His78, His241, and Asp245. His268 functions as the Proton donor in the catalytic mechanism.

The protein belongs to the LpxC family. Zn(2+) is required as a cofactor.

The catalysed reaction is a UDP-3-O-[(3R)-3-hydroxyacyl]-N-acetyl-alpha-D-glucosamine + H2O = a UDP-3-O-[(3R)-3-hydroxyacyl]-alpha-D-glucosamine + acetate. It participates in glycolipid biosynthesis; lipid IV(A) biosynthesis; lipid IV(A) from (3R)-3-hydroxytetradecanoyl-[acyl-carrier-protein] and UDP-N-acetyl-alpha-D-glucosamine: step 2/6. In terms of biological role, catalyzes the hydrolysis of UDP-3-O-myristoyl-N-acetylglucosamine to form UDP-3-O-myristoylglucosamine and acetate, the committed step in lipid A biosynthesis. The chain is UDP-3-O-acyl-N-acetylglucosamine deacetylase from Delftia acidovorans (strain DSM 14801 / SPH-1).